We begin with the raw amino-acid sequence, 176 residues long: Small ribosomal subunit protein uS5 (176 aa).

The region spanning 11–74 is the S5 DRBM domain; sequence LSEVLVDVNR…QAAKKRMMKV (64 aa).

It belongs to the universal ribosomal protein uS5 family. In terms of assembly, part of the 30S ribosomal subunit. Contacts proteins S4 and S8.

In terms of biological role, with S4 and S12 plays an important role in translational accuracy. Functionally, located at the back of the 30S subunit body where it stabilizes the conformation of the head with respect to the body. The polypeptide is Small ribosomal subunit protein uS5 (Rickettsia africae (strain ESF-5)).